Reading from the N-terminus, the 72-residue chain is MAKDDVIQMQGEVIENLPNATFRVKLENGHVVLGHISGKMRMHYIRILPGDKVTVELTPYDLSRARIVFRAK.

The S1-like domain occupies 1-72 (MAKDDVIQMQ…SRARIVFRAK (72 aa)).

The protein belongs to the IF-1 family. As to quaternary structure, component of the 30S ribosomal translation pre-initiation complex which assembles on the 30S ribosome in the order IF-2 and IF-3, IF-1 and N-formylmethionyl-tRNA(fMet); mRNA recruitment can occur at any time during PIC assembly.

It localises to the cytoplasm. One of the essential components for the initiation of protein synthesis. Stabilizes the binding of IF-2 and IF-3 on the 30S subunit to which N-formylmethionyl-tRNA(fMet) subsequently binds. Helps modulate mRNA selection, yielding the 30S pre-initiation complex (PIC). Upon addition of the 50S ribosomal subunit IF-1, IF-2 and IF-3 are released leaving the mature 70S translation initiation complex. In Burkholderia thailandensis (strain ATCC 700388 / DSM 13276 / CCUG 48851 / CIP 106301 / E264), this protein is Translation initiation factor IF-1.